Here is a 790-residue protein sequence, read N- to C-terminus: E3 ubiquitin-protein ligase Jade-2 (790 aa).

Disordered stretches follow at residues methionine 1–valine 52 and glycine 111–aspartate 130. 2 positions are modified to phosphoserine: serine 9 and serine 15. Residues serine 9–serine 28 are compositionally biased toward low complexity. An N6-acetyllysine mark is found at lysine 32 and lysine 38. A Phosphoserine modification is found at serine 117. Residues aspartate 199–glycine 249 form a PHD-type 1 zinc finger. Residues glutamine 251–valine 285 form a C2HC pre-PHD-type zinc finger. Residue lysine 298 is modified to N6-acetyllysine. A PHD-type 2 zinc finger spans residues leucine 309–serine 365. 2 disordered regions span residues cysteine 361 to aspartate 386 and serine 578 to alanine 777. Residues glutamate 372 to serine 381 show a composition bias toward polar residues. A compositionally biased stretch (basic residues) spans lysine 593 to proline 606. A compositionally biased stretch (low complexity) spans alanine 684–valine 693. A compositionally biased stretch (basic and acidic residues) spans glutamate 737 to threonine 747. Over residues glutamate 757–aspartate 767 the composition is skewed to acidic residues.

The protein belongs to the JADE family. Component of the HBO1 complex composed at least of ING4 or ING5, MYST2/HBO1, MEAF6, and one of JADE1, JADE2 and JADE3. Interacts (via C-terminus) with KDM1A (via AOD/Tower domain).

It carries out the reaction S-ubiquitinyl-[E2 ubiquitin-conjugating enzyme]-L-cysteine + [acceptor protein]-L-lysine = [E2 ubiquitin-conjugating enzyme]-L-cysteine + N(6)-ubiquitinyl-[acceptor protein]-L-lysine.. It functions in the pathway protein modification; protein ubiquitination. In terms of biological role, scaffold subunit of some HBO1 complexes, which have a histone H4 acetyltransferase activity. Acts as an E3 ubiquitin-protein ligase mediating the ubiquitination and subsequent proteasomal degradation of target protein histone demethylase KDM1A. Also acts as a ubiquitin ligase E3 toward itself. Positive regulator of neurogenesis. This Homo sapiens (Human) protein is E3 ubiquitin-protein ligase Jade-2 (JADE2).